The primary structure comprises 304 residues: Serine/threonine-protein phosphatase PP1 isozyme 3 (304 aa).

Residues aspartate 61, histidine 63, aspartate 89, and asparagine 121 each coordinate Mn(2+). The Proton donor role is filled by histidine 122. Mn(2+)-binding residues include histidine 170 and histidine 245.

Belongs to the PPP phosphatase family. PP-1 subfamily. Mn(2+) serves as cofactor.

It carries out the reaction O-phospho-L-seryl-[protein] + H2O = L-seryl-[protein] + phosphate. The enzyme catalyses O-phospho-L-threonyl-[protein] + H2O = L-threonyl-[protein] + phosphate. In Nicotiana tabacum (Common tobacco), this protein is Serine/threonine-protein phosphatase PP1 isozyme 3 (NPP3).